Reading from the N-terminus, the 358-residue chain is 3-dehydroquinate synthase (358 aa).

Residues 102–106 (GVVGD), 126–127 (TT), lysine 139, and lysine 148 each bind NAD(+). Glutamate 181, histidine 244, and histidine 260 together coordinate Zn(2+).

Belongs to the sugar phosphate cyclases superfamily. Dehydroquinate synthase family. The cofactor is Co(2+). Zn(2+) serves as cofactor. It depends on NAD(+) as a cofactor.

The protein localises to the cytoplasm. It catalyses the reaction 7-phospho-2-dehydro-3-deoxy-D-arabino-heptonate = 3-dehydroquinate + phosphate. The protein operates within metabolic intermediate biosynthesis; chorismate biosynthesis; chorismate from D-erythrose 4-phosphate and phosphoenolpyruvate: step 2/7. Its function is as follows. Catalyzes the conversion of 3-deoxy-D-arabino-heptulosonate 7-phosphate (DAHP) to dehydroquinate (DHQ). This chain is 3-dehydroquinate synthase, found in Symbiobacterium thermophilum (strain DSM 24528 / JCM 14929 / IAM 14863 / T).